The following is a 427-amino-acid chain: Chaperone SurA (427 aa).

The N-terminal stretch at M1–A19 is a signal peptide. PpiC domains lie at T170–D268 and V277–D377.

It is found in the periplasm. The catalysed reaction is [protein]-peptidylproline (omega=180) = [protein]-peptidylproline (omega=0). Its function is as follows. Chaperone involved in the correct folding and assembly of outer membrane proteins. Recognizes specific patterns of aromatic residues and the orientation of their side chains, which are found more frequently in integral outer membrane proteins. May act in both early periplasmic and late outer membrane-associated steps of protein maturation. The polypeptide is Chaperone SurA (Vibrio parahaemolyticus serotype O3:K6 (strain RIMD 2210633)).